Reading from the N-terminus, the 155-residue chain is 6,7-dimethyl-8-ribityllumazine synthase (155 aa).

5-amino-6-(D-ribitylamino)uracil contacts are provided by residues phenylalanine 23, 57 to 59 (AFE), and 81 to 83 (AVI). A (2S)-2-hydroxy-3-oxobutyl phosphate-binding site is contributed by 86–87 (ST). Residue histidine 89 is the Proton donor of the active site. Phenylalanine 114 provides a ligand contact to 5-amino-6-(D-ribitylamino)uracil. Arginine 128 contributes to the (2S)-2-hydroxy-3-oxobutyl phosphate binding site.

Belongs to the DMRL synthase family.

The enzyme catalyses (2S)-2-hydroxy-3-oxobutyl phosphate + 5-amino-6-(D-ribitylamino)uracil = 6,7-dimethyl-8-(1-D-ribityl)lumazine + phosphate + 2 H2O + H(+). Its pathway is cofactor biosynthesis; riboflavin biosynthesis; riboflavin from 2-hydroxy-3-oxobutyl phosphate and 5-amino-6-(D-ribitylamino)uracil: step 1/2. Catalyzes the formation of 6,7-dimethyl-8-ribityllumazine by condensation of 5-amino-6-(D-ribitylamino)uracil with 3,4-dihydroxy-2-butanone 4-phosphate. This is the penultimate step in the biosynthesis of riboflavin. This Dehalococcoides mccartyi (strain ATCC BAA-2100 / JCM 16839 / KCTC 5957 / BAV1) protein is 6,7-dimethyl-8-ribityllumazine synthase.